Here is a 552-residue protein sequence, read N- to C-terminus: Polypyrimidine tract-binding protein 3 (552 aa).

An N-acetylmethionine modification is found at Met1. The residue at position 17 (Ser17) is a Phosphoserine. A compositionally biased stretch (polar residues) spans 32–43 (MNSSTPSTANGN). The interval 32–55 (MNSSTPSTANGNDSKKFKRDRPPC) is disordered. 3 consecutive RRM domains span residues 59–143 (RVLH…NLPN), 182–258 (LRII…FSKL), and 358–432 (SVLL…LSKH). A Glycyl lysine isopeptide (Lys-Gly) (interchain with G-Cter in SUMO2) cross-link involves residue Lys65. Phosphotyrosine is present on Tyr127. Thr138 is subject to Phosphothreonine. Residue Lys216 forms a Glycyl lysine isopeptide (Lys-Gly) (interchain with G-Cter in SUMO2) linkage. Residue Lys423 is modified to N6-acetyllysine. The tract at residues 435–455 (VQLPREGQEDQGLTKDFSNSP) is disordered. Ser454 carries the phosphoserine modification. The RRM 4 domain occupies 475-550 (ATLHLSNIPP…HHLRVSFSKS (76 aa)).

As to quaternary structure, interacts with THBS4 (via the acidic amphipathic C-terminus). Expressed in several hematopoietic cell lines examined.

RNA-binding protein that mediates pre-mRNA alternative splicing regulation. Plays a role in the regulation of cell proliferation, differentiation and migration. Positive regulator of EPO-dependent erythropoiesis. Participates in cell differentiation regulation by repressing tissue-specific exons. Promotes FAS exon 6 skipping. Binds RNA, preferentially to both poly(G) and poly(U). The polypeptide is Polypyrimidine tract-binding protein 3 (PTBP3) (Homo sapiens (Human)).